The sequence spans 354 residues: Protein Wnt-8a (354 aa).

Residues 1-19 (MGHLLMLWVAAGMCYPALG) form the signal peptide. The cysteines at positions 54 and 65 are disulfide-linked. N-linked (GlcNAc...) asparagine glycosylation occurs at Asn-103. Disulfide bonds link Cys-104–Cys-112, Cys-114–Cys-132, Cys-180–Cys-194, Cys-182–Cys-189, Cys-259–Cys-297, Cys-275–Cys-290, Cys-294–Cys-336, Cys-312–Cys-327, Cys-314–Cys-324, and Cys-319–Cys-320. Residue Ser-186 is the site of O-palmitoleoyl serine attachment. The N-linked (GlcNAc...) asparagine glycan is linked to Asn-262.

The protein belongs to the Wnt family. In terms of assembly, forms a soluble 1:1 complex with AFM; this prevents oligomerization and is required for prolonged biological activity. The complex with AFM may represent the physiological form in body fluids. Post-translationally, palmitoleoylation is required for efficient binding to frizzled receptors. Depalmitoleoylation leads to Wnt signaling pathway inhibition. In terms of processing, proteolytic processing by TIKI1 and TIKI2 promotes oxidation and formation of large disulfide-bond oligomers, leading to inactivation of WNT8A.

The protein localises to the secreted. The protein resides in the extracellular space. It is found in the extracellular matrix. In terms of biological role, ligand for members of the frizzled family of seven transmembrane receptors. Plays a role in embryonic patterning. The protein is Protein Wnt-8a (Wnt8a) of Mus musculus (Mouse).